A 362-amino-acid chain; its full sequence is tRNA/tmRNA (uracil-C(5))-methyltransferase (362 aa).

The S-adenosyl-L-methionine site is built by Gln-182, Tyr-210, Asn-215, Glu-231, and Asp-293. Residue Cys-318 is the Nucleophile of the active site. Glu-352 (proton acceptor) is an active-site residue.

This sequence belongs to the class I-like SAM-binding methyltransferase superfamily. RNA M5U methyltransferase family. TrmA subfamily.

It catalyses the reaction uridine(54) in tRNA + S-adenosyl-L-methionine = 5-methyluridine(54) in tRNA + S-adenosyl-L-homocysteine + H(+). It carries out the reaction uridine(341) in tmRNA + S-adenosyl-L-methionine = 5-methyluridine(341) in tmRNA + S-adenosyl-L-homocysteine + H(+). In terms of biological role, dual-specificity methyltransferase that catalyzes the formation of 5-methyluridine at position 54 (m5U54) in all tRNAs, and that of position 341 (m5U341) in tmRNA (transfer-mRNA). This Neisseria meningitidis serogroup A / serotype 4A (strain DSM 15465 / Z2491) protein is tRNA/tmRNA (uracil-C(5))-methyltransferase.